We begin with the raw amino-acid sequence, 220 residues long: Translation initiation factor 6 (220 aa).

This sequence belongs to the eIF-6 family.

Binds to the 50S ribosomal subunit and prevents its association with the 30S ribosomal subunit to form the 70S initiation complex. The chain is Translation initiation factor 6 from Pyrobaculum aerophilum (strain ATCC 51768 / DSM 7523 / JCM 9630 / CIP 104966 / NBRC 100827 / IM2).